A 155-amino-acid chain; its full sequence is SsrA-binding protein (155 aa).

It belongs to the SmpB family.

It is found in the cytoplasm. In terms of biological role, required for rescue of stalled ribosomes mediated by trans-translation. Binds to transfer-messenger RNA (tmRNA), required for stable association of tmRNA with ribosomes. tmRNA and SmpB together mimic tRNA shape, replacing the anticodon stem-loop with SmpB. tmRNA is encoded by the ssrA gene; the 2 termini fold to resemble tRNA(Ala) and it encodes a 'tag peptide', a short internal open reading frame. During trans-translation Ala-aminoacylated tmRNA acts like a tRNA, entering the A-site of stalled ribosomes, displacing the stalled mRNA. The ribosome then switches to translate the ORF on the tmRNA; the nascent peptide is terminated with the 'tag peptide' encoded by the tmRNA and targeted for degradation. The ribosome is freed to recommence translation, which seems to be the essential function of trans-translation. The protein is SsrA-binding protein of Bacillus mycoides (strain KBAB4) (Bacillus weihenstephanensis).